The chain runs to 398 residues: tRNA-specific 2-thiouridylase MnmA (398 aa).

Residues 20–27 (AMSGGVDS) and L46 contribute to the ATP site. C114 (nucleophile) is an active-site residue. A disulfide bridge links C114 with C210. Residue G138 coordinates ATP. An interaction with tRNA region spans residues 160 to 162 (RDQ). C210 acts as the Cysteine persulfide intermediate in catalysis.

The protein belongs to the MnmA/TRMU family.

It is found in the cytoplasm. The enzyme catalyses S-sulfanyl-L-cysteinyl-[protein] + uridine(34) in tRNA + AH2 + ATP = 2-thiouridine(34) in tRNA + L-cysteinyl-[protein] + A + AMP + diphosphate + H(+). In terms of biological role, catalyzes the 2-thiolation of uridine at the wobble position (U34) of tRNA, leading to the formation of s(2)U34. The sequence is that of tRNA-specific 2-thiouridylase MnmA from Brucella canis (strain ATCC 23365 / NCTC 10854 / RM-666).